A 113-amino-acid chain; its full sequence is Iron-sulfur cluster insertion protein ErpA (113 aa).

Residues cysteine 41, cysteine 105, and cysteine 107 each coordinate iron-sulfur cluster.

Belongs to the HesB/IscA family. As to quaternary structure, homodimer. The cofactor is iron-sulfur cluster.

Functionally, required for insertion of 4Fe-4S clusters for at least IspG. The chain is Iron-sulfur cluster insertion protein ErpA from Aliivibrio fischeri (strain ATCC 700601 / ES114) (Vibrio fischeri).